The chain runs to 205 residues: DNA-directed RNA polymerase RPB5 homolog (205 aa).

This sequence belongs to the archaeal RpoH/eukaryotic RPB5 RNA polymerase subunit family. As to quaternary structure, part of the viral DNA-directed RNA polymerase that consists of 8 polII-like subunits (RPB1, RPB2, RPB3, RPB5, RPB6, RPB7, RPB9, RPB10), a capping enzyme and a termination factor.

It localises to the host cytoplasm. It is found in the virion. Component of the DNA-directed RNA polymerase (RNAP) that catalyzes the transcription in the cytoplasm of viral DNA into RNA using the four ribonucleoside triphosphates as substrates. In African swine fever virus (isolate Pig/Kenya/KEN-50/1950) (ASFV), this protein is DNA-directed RNA polymerase RPB5 homolog.